Consider the following 102-residue polypeptide: Integration host factor subunit beta (102 aa).

The protein belongs to the bacterial histone-like protein family. In terms of assembly, heterodimer of an alpha and a beta chain.

In terms of biological role, this protein is one of the two subunits of integration host factor, a specific DNA-binding protein that functions in genetic recombination as well as in transcriptional and translational control. The sequence is that of Integration host factor subunit beta (ihfB) from Rhizobium radiobacter (Agrobacterium tumefaciens).